Consider the following 78-residue polypeptide: Protein SlyX homolog (78 aa).

The protein belongs to the SlyX family.

The protein is Protein SlyX homolog of Xanthomonas euvesicatoria pv. vesicatoria (strain 85-10) (Xanthomonas campestris pv. vesicatoria).